Here is a 1357-residue protein sequence, read N- to C-terminus: Regulator of V-ATPase in vacuolar membrane protein 1 (1357 aa).

8 WD repeats span residues 98 to 134 (HDDT…GVYQ), 142 to 182 (KQPK…GEQA), 190 to 239 (PHPK…KNHT), 384 to 423 (GHNK…HGVS), 431 to 470 (QTES…KEDS), 595 to 636 (INTG…LEYE), 638 to 679 (TFHN…YTNN), and 898 to 939 (QKSI…RIAY). The tract at residues 1243–1357 (GSPSASDIES…ITKNLLDDFV (115 aa)) is disordered. Phosphoserine occurs at positions 1244 and 1248. Over residues 1272-1288 (STSSNSLAQSSSSAPRS) the composition is skewed to low complexity. The span at 1320-1332 (SENRKDKLSKDIL) shows a compositional bias: basic and acidic residues.

Component of the RAVE complex composed of RAV1, RAV2 and CBF3D/SKP1. Within the complex, it interacts directly with RAV2 and CBF3D. Interacts with the V-ATPase V1 subunits VMA1, VMA2 and VMA8.

Its subcellular location is the endomembrane system. In terms of biological role, component of the RAVE complex, which is required for stable assembly of the vacuolar ATPase complex V-ATPase under many conditions. Required for transport between the early endosome and the late endosome/prevacuolar compartment (PVC), suggesting that assembly of vacuolar ATPase at the early endosome is required for transport from the early endosome to the PVC. The chain is Regulator of V-ATPase in vacuolar membrane protein 1 (RAV1) from Saccharomyces cerevisiae (strain ATCC 204508 / S288c) (Baker's yeast).